The sequence spans 260 residues: Isoprenyl transferase (260 aa).

Residue aspartate 38 is part of the active site. Aspartate 38 contacts Mg(2+). Residues 39-42 (GNGR), tryptophan 43, arginine 51, histidine 55, and 83-85 (STE) each bind substrate. Residue asparagine 86 is the Proton acceptor of the active site. Residues tryptophan 87, arginine 89, arginine 206, and 212–214 (RLS) each bind substrate. Glutamate 225 is a Mg(2+) binding site.

This sequence belongs to the UPP synthase family. In terms of assembly, homodimer. Mg(2+) serves as cofactor.

Catalyzes the condensation of isopentenyl diphosphate (IPP) with allylic pyrophosphates generating different type of terpenoids. The polypeptide is Isoprenyl transferase (Heliobacterium mobile (Heliobacillus mobilis)).